The primary structure comprises 77 residues: Large ribosomal subunit protein bL28 (77 aa).

Positions 1–25 are disordered; it reads MARVCQVTGKAPMSGNNVSHANNKT.

It belongs to the bacterial ribosomal protein bL28 family.

The sequence is that of Large ribosomal subunit protein bL28 from Paraburkholderia phytofirmans (strain DSM 17436 / LMG 22146 / PsJN) (Burkholderia phytofirmans).